A 188-amino-acid polypeptide reads, in one-letter code: Large ribosomal subunit protein eL18 (188 aa).

Residue Lys119 forms a Glycyl lysine isopeptide (Lys-Gly) (interchain with G-Cter in SUMO2) linkage. The residue at position 130 (Ser130) is a Phosphoserine. The tract at residues 151 to 188 is disordered; it reads HFGKAPGTPHSHTKPYVRSKGRKFERARGRRASRGYKN. Thr158 carries the phosphothreonine modification. 2 stretches are compositionally biased toward basic residues: residues 161–171 and 178–188; these read SHTKPYVRSKG and RGRRASRGYKN. Lys164 participates in a covalent cross-link: Glycyl lysine isopeptide (Lys-Gly) (interchain with G-Cter in SUMO2).

It belongs to the eukaryotic ribosomal protein eL18 family. Component of the large ribosomal subunit.

The protein resides in the cytoplasm. It localises to the cytosol. Its subcellular location is the rough endoplasmic reticulum. Its function is as follows. Component of the large ribosomal subunit. The ribosome is a large ribonucleoprotein complex responsible for the synthesis of proteins in the cell. The chain is Large ribosomal subunit protein eL18 (RPL18) from Canis lupus familiaris (Dog).